A 321-amino-acid polypeptide reads, in one-letter code: MKKGQLFIGALTCLVASMSWGAMFPVADHALEFVDPFYFSFIRYGVVTIMLVILLLVREGKKSFHLEGKAKWIILFGVMAFTIYNVLIFLGQRLMGKSGIMTASIAEALMPMLSIVILWGYKHVKPKKYTMISILIAFLGASMVITKGNISFFFSLGDHLFSILFIFIGVLGWVVYTMGGQIFREWSTLRYSTLTCLFGTAITGIMTAILTAQGYVSVPSIKVIAAIKYDFLFMITLPGIIALLSWNYGIKILSSINGILFINFVPITTLLIMVIKGYNITAFDIVGTLFVIIGLILNNIYQRKEDYKQVLQKEKTNLTIT.

The next 10 helical transmembrane spans lie at 6–26 (LFIG…MFPV), 37–57 (FYFS…LLLV), 72–92 (WIIL…FLGQ), 100–120 (IMTA…ILWG), 134–154 (ILIA…SFFF), 160–180 (LFSI…TMGG), 196–216 (CLFG…QGYV), 223–243 (VIAA…IIAL), 255–275 (SING…IMVI), and 277–297 (GYNI…GLIL). EamA domains follow at residues 18–146 (MSWG…MVIT) and 175–300 (VYTM…LNNI).

It belongs to the EamA transporter family.

Its subcellular location is the cell membrane. This is an uncharacterized protein from Bacillus subtilis (strain 168).